Here is a 322-residue protein sequence, read N- to C-terminus: Cell division control protein 10 (322 aa).

An N-acetylmethionine modification is found at methionine 1. Positions 29-302 (KGFQFNIMVV…EGFRARQLIA (274 aa)) constitute a Septin-type G domain. Positions 39–46 (GQSGLGKS) are G1 motif. GTP is bound by residues 39–46 (GQSGLGKS), threonine 74, glycine 100, and 180–188 (KSDTLTLDE). A G3 motif region spans residues 97-100 (DTPG). Residues 179-182 (GKSD) form a G4 motif region. Threonine 216 is modified (phosphothreonine). Residues glycine 236 and arginine 251 each coordinate GTP.

The protein belongs to the TRAFAC class TrmE-Era-EngA-EngB-Septin-like GTPase superfamily. Septin GTPase family. As to quaternary structure, component of the septin complex which consists of CDC3, CDC10, CDC11, CDC12 and probably SHS1 and rearranges to a cortical collar of highly ordered filaments at the mother-bud-neck. A complex formed by CDC3, CDC10, CDC11 and CDC12 is capable of forming long filaments in vitro and the components seem to be present in a 2:2:2:2 arrangement in vivo. The filaments are proposed to be formed by the end-to-end polymerization of CDC3-CDC12-CDC11 complexes with CDC10 serving as a bridge to bundle the polymers into paired filaments. Component of the GIN4 complex composed of at least BNI5, CDC3, CDC10, CDC11, CDC12, GIN4, NAP1 and SHS1. Self-associates. Interacts with SYP1.

Its subcellular location is the membrane. The protein localises to the bud neck. Functionally, septins are GTPases involved in cytokinesis that assemble early in the cell cycle as a patch at the incipient bud site and form a ring approximate 15 minutes before bud emergence, which transforms into an hour-glass shaped collar of cortical filaments that spans both sides of the mother-bud neck. This collar persists until just before cytokinesis, when it splits into two rings that occupy opposite sides of the neck. The septins at the bud neck serve as a structural scaffold that recruits different components involved in diverse processes at specific stages during the cell cycle. Many proteins bind asymmetrically to the septin collar. The septin assembly is regulated by protein kinases GIN4 and/or CLA4. May act by recruiting MYO1 and HOF1, a protein involved in septation, to the site of cleavage. Septins are also involved in cell morphogenesis, bud site selection, chitin deposition, cell cycle regulation, cell compartmentalization and spore wall formation. The sequence is that of Cell division control protein 10 (CDC10) from Saccharomyces cerevisiae (strain ATCC 204508 / S288c) (Baker's yeast).